Here is a 227-residue protein sequence, read N- to C-terminus: MTQRAIVLLSGGLDSATVLAMARAQGFETYALSMRYGQRHSSELEAAKRVAAALGAVRHEIVDLDLRRFGGSALTDDALEVPTDGASGGIPVTYVPARNTIMLSLALGWAEAVGGRDLFFGANAVDYSGYPDCRPEYVAAYETLANLATKAGVEGDRFRVHAPIIDMTKGEIIRAGIALGVDYSLTVSCYQADDDGRACGVCDSCRIRRAGFEAAGVPDPTRYQAAA.

9–19 (LSGGLDSATVL) contacts ATP. The Zn(2+) site is built by C189, C199, C202, and C205.

It belongs to the QueC family. Requires Zn(2+) as cofactor.

It carries out the reaction 7-carboxy-7-deazaguanine + NH4(+) + ATP = 7-cyano-7-deazaguanine + ADP + phosphate + H2O + H(+). The protein operates within purine metabolism; 7-cyano-7-deazaguanine biosynthesis. Catalyzes the ATP-dependent conversion of 7-carboxy-7-deazaguanine (CDG) to 7-cyano-7-deazaguanine (preQ(0)). The chain is 7-cyano-7-deazaguanine synthase from Cupriavidus taiwanensis (strain DSM 17343 / BCRC 17206 / CCUG 44338 / CIP 107171 / LMG 19424 / R1) (Ralstonia taiwanensis (strain LMG 19424)).